We begin with the raw amino-acid sequence, 243 residues long: Ubiquinone/menaquinone biosynthesis C-methyltransferase UbiE (243 aa).

S-adenosyl-L-methionine contacts are provided by residues Thr69, Asp90, and 116–117; that span reads DA.

Belongs to the class I-like SAM-binding methyltransferase superfamily. MenG/UbiE family.

It carries out the reaction a 2-demethylmenaquinol + S-adenosyl-L-methionine = a menaquinol + S-adenosyl-L-homocysteine + H(+). The catalysed reaction is a 2-methoxy-6-(all-trans-polyprenyl)benzene-1,4-diol + S-adenosyl-L-methionine = a 5-methoxy-2-methyl-3-(all-trans-polyprenyl)benzene-1,4-diol + S-adenosyl-L-homocysteine + H(+). Its pathway is quinol/quinone metabolism; menaquinone biosynthesis; menaquinol from 1,4-dihydroxy-2-naphthoate: step 2/2. The protein operates within cofactor biosynthesis; ubiquinone biosynthesis. Functionally, methyltransferase required for the conversion of demethylmenaquinol (DMKH2) to menaquinol (MKH2) and the conversion of 2-polyprenyl-6-methoxy-1,4-benzoquinol (DDMQH2) to 2-polyprenyl-3-methyl-6-methoxy-1,4-benzoquinol (DMQH2). This chain is Ubiquinone/menaquinone biosynthesis C-methyltransferase UbiE, found in Ralstonia nicotianae (strain ATCC BAA-1114 / GMI1000) (Ralstonia solanacearum).